Here is a 518-residue protein sequence, read N- to C-terminus: Uronate isomerase (518 aa).

This sequence belongs to the metallo-dependent hydrolases superfamily. Uronate isomerase family.

It carries out the reaction D-glucuronate = D-fructuronate. The catalysed reaction is aldehydo-D-galacturonate = keto-D-tagaturonate. Its pathway is carbohydrate metabolism; pentose and glucuronate interconversion. This Corynebacterium glutamicum (strain ATCC 13032 / DSM 20300 / JCM 1318 / BCRC 11384 / CCUG 27702 / LMG 3730 / NBRC 12168 / NCIMB 10025 / NRRL B-2784 / 534) protein is Uronate isomerase (uxaC).